The sequence spans 186 residues: UPF0301 protein APL_0232 (186 aa).

Belongs to the UPF0301 (AlgH) family.

The chain is UPF0301 protein APL_0232 from Actinobacillus pleuropneumoniae serotype 5b (strain L20).